An 872-amino-acid chain; its full sequence is DNA mismatch repair protein MutS (872 aa).

602 to 609 (GPNMSGKS) contacts ATP.

Belongs to the DNA mismatch repair MutS family.

This protein is involved in the repair of mismatches in DNA. It is possible that it carries out the mismatch recognition step. This protein has a weak ATPase activity. The chain is DNA mismatch repair protein MutS from Staphylococcus aureus (strain bovine RF122 / ET3-1).